We begin with the raw amino-acid sequence, 196 residues long: Large ribosomal subunit protein bL9c (196 aa).

Residues 1-41 (MASTTSTLSLSWSNSFHSFAGAISEPQKSPENCRVMLPIVA) constitute a chloroplast transit peptide.

In terms of assembly, component of the chloroplast large ribosomal subunit (LSU). Mature 70S chloroplast ribosomes of higher plants consist of a small (30S) and a large (50S) subunit. The 30S small subunit contains 1 molecule of ribosomal RNA (16S rRNA) and 24 different proteins. The 50S large subunit contains 3 rRNA molecules (23S, 5S and 4.5S rRNA) and 33 different proteins.

It is found in the plastid. Its subcellular location is the chloroplast. In terms of biological role, component of the chloroplast ribosome (chloro-ribosome), a dedicated translation machinery responsible for the synthesis of chloroplast genome-encoded proteins, including proteins of the transcription and translation machinery and components of the photosynthetic apparatus. This Spinacia oleracea (Spinach) protein is Large ribosomal subunit protein bL9c (RPL9).